The following is a 238-amino-acid chain: Ribosomal RNA small subunit methyltransferase G (238 aa).

Residues Gly-77, Phe-82, 128–129 (AE), and Arg-147 contribute to the S-adenosyl-L-methionine site. The tract at residues 219–238 (KETPNKYPRKPGTPNKLPIE) is disordered.

It belongs to the methyltransferase superfamily. RNA methyltransferase RsmG family.

The protein resides in the cytoplasm. Its function is as follows. Specifically methylates the N7 position of guanine in position 535 of 16S rRNA. This Listeria monocytogenes serovar 1/2a (strain ATCC BAA-679 / EGD-e) protein is Ribosomal RNA small subunit methyltransferase G.